A 117-amino-acid chain; its full sequence is Large ribosomal subunit protein uL18 (117 aa).

The protein belongs to the universal ribosomal protein uL18 family. Part of the 50S ribosomal subunit; part of the 5S rRNA/L5/L18/L25 subcomplex. Contacts the 5S and 23S rRNAs.

In terms of biological role, this is one of the proteins that bind and probably mediate the attachment of the 5S RNA into the large ribosomal subunit, where it forms part of the central protuberance. This is Large ribosomal subunit protein uL18 from Pectobacterium atrosepticum (strain SCRI 1043 / ATCC BAA-672) (Erwinia carotovora subsp. atroseptica).